We begin with the raw amino-acid sequence, 154 residues long: Large ribosomal subunit protein uL22c (154 aa).

The protein belongs to the universal ribosomal protein uL22 family. In terms of assembly, part of the 50S ribosomal subunit.

It is found in the plastid. The protein localises to the chloroplast. Functionally, this protein binds specifically to 23S rRNA. In terms of biological role, the globular domain of the protein is located near the polypeptide exit tunnel on the outside of the subunit, while an extended beta-hairpin is found that lines the wall of the exit tunnel in the center of the 70S ribosome. In Helianthus annuus (Common sunflower), this protein is Large ribosomal subunit protein uL22c (rpl22).